Here is a 258-residue protein sequence, read N- to C-terminus: Enterotoxin type D (258 aa).

The signal sequence occupies residues 1-25 (MKKFNILIALLFFTSLVISPLNVKA). 4 residues coordinate Zn(2+): Asp-212, His-248, His-250, and Asp-252.

The protein belongs to the staphylococcal/streptococcal toxin family. Homodimer; zinc-dependent. Interacts with MHC class II molecules composed of alpha/HLA-DRA and beta/HLA-DRB1 chains. It depends on Zn(2+) as a cofactor.

It is found in the secreted. Staphylococcal enterotoxin that activates the host immune system by binding as unprocessed molecules to major histocompatibility (MHC) complex class II and T-cell receptor (TCR) molecules. In turn, this ternary complex activates a large number of T-lymphocytes initiating a systemic release of pro-inflammatory cytokines. In addition, induces B-cell proliferation and differentiation in the presence of T-cells. Causes also the intoxication staphylococcal food poisoning syndrome. The protein is Enterotoxin type D (entD) of Staphylococcus aureus.